The primary structure comprises 294 residues: 4-hydroxy-tetrahydrodipicolinate synthase (294 aa).

T47 contributes to the pyruvate binding site. Y135 functions as the Proton donor/acceptor in the catalytic mechanism. Catalysis depends on K163, which acts as the Schiff-base intermediate with substrate. I205 is a binding site for pyruvate.

Belongs to the DapA family. As to quaternary structure, homotetramer; dimer of dimers.

Its subcellular location is the cytoplasm. It catalyses the reaction L-aspartate 4-semialdehyde + pyruvate = (2S,4S)-4-hydroxy-2,3,4,5-tetrahydrodipicolinate + H2O + H(+). The protein operates within amino-acid biosynthesis; L-lysine biosynthesis via DAP pathway; (S)-tetrahydrodipicolinate from L-aspartate: step 3/4. Its function is as follows. Catalyzes the condensation of (S)-aspartate-beta-semialdehyde [(S)-ASA] and pyruvate to 4-hydroxy-tetrahydrodipicolinate (HTPA). The sequence is that of 4-hydroxy-tetrahydrodipicolinate synthase from Rickettsia typhi (strain ATCC VR-144 / Wilmington).